The following is a 376-amino-acid chain: Chaperone protein DnaJ (376 aa).

The J domain occupies 5-70 (DYYEVLGVAR…NKRRAYDAHG (66 aa)). The segment at 132–209 (GIERRIEIPT…CHGAGRVEED (78 aa)) adopts a CR-type zinc-finger fold. Residues cysteine 145, cysteine 148, cysteine 161, cysteine 164, cysteine 183, cysteine 186, cysteine 197, and cysteine 200 each coordinate Zn(2+). CXXCXGXG motif repeat units lie at residues 145–152 (CEPCHGSG), 161–168 (CATCHGRG), 183–190 (CPHCDGRG), and 197–204 (CKTCHGAG).

The protein belongs to the DnaJ family. Homodimer. Zn(2+) is required as a cofactor.

It localises to the cytoplasm. Its function is as follows. Participates actively in the response to hyperosmotic and heat shock by preventing the aggregation of stress-denatured proteins and by disaggregating proteins, also in an autonomous, DnaK-independent fashion. Unfolded proteins bind initially to DnaJ; upon interaction with the DnaJ-bound protein, DnaK hydrolyzes its bound ATP, resulting in the formation of a stable complex. GrpE releases ADP from DnaK; ATP binding to DnaK triggers the release of the substrate protein, thus completing the reaction cycle. Several rounds of ATP-dependent interactions between DnaJ, DnaK and GrpE are required for fully efficient folding. Also involved, together with DnaK and GrpE, in the DNA replication of plasmids through activation of initiation proteins. The sequence is that of Chaperone protein DnaJ from Xanthomonas campestris pv. campestris (strain 8004).